The primary structure comprises 222 residues: 7-cyano-7-deazaguanine synthase (222 aa).

8-18 (LSGGMDSTTAA) contributes to the ATP binding site. Residues cysteine 187, cysteine 195, cysteine 198, and cysteine 201 each coordinate Zn(2+).

Belongs to the QueC family. Requires Zn(2+) as cofactor.

It carries out the reaction 7-carboxy-7-deazaguanine + NH4(+) + ATP = 7-cyano-7-deazaguanine + ADP + phosphate + H2O + H(+). Its pathway is purine metabolism; 7-cyano-7-deazaguanine biosynthesis. Catalyzes the ATP-dependent conversion of 7-carboxy-7-deazaguanine (CDG) to 7-cyano-7-deazaguanine (preQ(0)). This chain is 7-cyano-7-deazaguanine synthase, found in Nautilia profundicola (strain ATCC BAA-1463 / DSM 18972 / AmH).